The following is a 238-amino-acid chain: Membrane protein 2 (238 aa).

It belongs to the varicellovirus ORF2 protein family. Phosphorylated by host.

It is found in the host membrane. This is Membrane protein 2 from Varicella-zoster virus (strain Dumas) (HHV-3).